Here is a 283-residue protein sequence, read N- to C-terminus: Cyclin-C (283 aa).

The Cyclin N-terminal domain occupies 20–151 (DLLKERQKDL…LLELMDCCLI (132 aa)). The interval 252–283 (TILSKMPKPKPPPNSEGEQGPNGSQNSSYSQS) is disordered. Polar residues predominate over residues 272–283 (PNGSQNSSYSQS). Ser-275 is subject to Phosphoserine.

It belongs to the cyclin family. Cyclin C subfamily. As to quaternary structure, component of the Mediator complex, which is composed of MED1, MED4, MED6, MED7, MED8, MED9, MED10, MED11, MED12, MED13, MED13L, MED14, MED15, MED16, MED17, MED18, MED19, MED20, MED21, MED22, MED23, MED24, MED25, MED26, MED27, MED29, MED30, MED31, CCNC, CDK8 and CDC2L6/CDK11. The MED12, MED13, CCNC and CDK8 subunits form a distinct module termed the CDK8 module. Mediator containing the CDK8 module is less active than Mediator lacking this module in supporting transcriptional activation. Individual preparations of the Mediator complex lacking one or more distinct subunits have been variously termed ARC, CRSP, DRIP, PC2, SMCC and TRAP. The cylin/CDK pair formed by CCNC/CDK8 also associates with the large subunit of RNA polymerase II.

The protein resides in the nucleus. Its function is as follows. Component of the Mediator complex, a coactivator involved in regulated gene transcription of nearly all RNA polymerase II-dependent genes. Mediator functions as a bridge to convey information from gene-specific regulatory proteins to the basal RNA polymerase II transcription machinery. Mediator is recruited to promoters by direct interactions with regulatory proteins and serves as a scaffold for the assembly of a functional preinitiation complex with RNA polymerase II and the general transcription factors. Binds to and activates cyclin-dependent kinase CDK8 that phosphorylates the CTD (C-terminal domain) of the large subunit of RNA polymerase II (RNAp II), which may inhibit the formation of a transcription initiation complex. The chain is Cyclin-C (Ccnc) from Mus musculus (Mouse).